Consider the following 316-residue polypeptide: NAC domain-containing protein 2 (316 aa).

The 154-residue stretch at L17–K170 folds into the NAC domain. The DNA-binding element occupies L114 to K176. The disordered stretch occupies residues E185 to S210. Residues M190 to H200 show a composition bias toward polar residues.

As to quaternary structure, forms homodimer. Interacts with NAC071. In terms of tissue distribution, expressed in roots and stamens.

Its subcellular location is the nucleus. In terms of biological role, transcription factor that possesses transactivation activity. Transcription activator involved in response to abiotic stresses. Plays a positive role during dehydration and salt stress. Binds specifically to the 5'-CATGTG-3' motif found in promoters of stress-responsive genes. In Oryza sativa subsp. japonica (Rice), this protein is NAC domain-containing protein 2.